Reading from the N-terminus, the 640-residue chain is RecBCD enzyme subunit RecD (640 aa).

An ATP-binding site is contributed by glycine 194–threonine 201.

It belongs to the RecD family. Heterotrimer of RecB, RecC and RecD. All subunits contribute to DNA-binding.

The catalysed reaction is Couples ATP hydrolysis with the unwinding of duplex DNA at the replication fork by translocating in the 5'-3' direction. This creates two antiparallel DNA single strands (ssDNA). The leading ssDNA polymer is the template for DNA polymerase III holoenzyme which synthesizes a continuous strand.. The enzyme catalyses ATP + H2O = ADP + phosphate + H(+). A helicase/nuclease that prepares dsDNA breaks (DSB) for recombinational DNA repair. Binds to DSBs and unwinds DNA via a highly rapid and processive ATP-dependent bidirectional helicase activity. Unwinds dsDNA until it encounters a Chi (crossover hotspot instigator) sequence from the 3' direction. Cuts ssDNA a few nucleotides 3' to the Chi site. The properties and activities of the enzyme are changed at Chi. The Chi-altered holoenzyme produces a long 3'-ssDNA overhang and facilitates RecA-binding to the ssDNA for homologous DNA recombination and repair. Holoenzyme degrades any linearized DNA that is unable to undergo homologous recombination. In the holoenzyme this subunit has ssDNA-dependent ATPase and 5'-3' helicase activity. When added to pre-assembled RecBC greatly stimulates nuclease activity and augments holoenzyme processivity. Negatively regulates the RecA-loading ability of RecBCD. The protein is RecBCD enzyme subunit RecD of Haemophilus influenzae (strain ATCC 51907 / DSM 11121 / KW20 / Rd).